The sequence spans 34 residues: Tau-theraphotoxin-Pc1c (34 aa).

Cystine bridges form between Cys2/Cys16, Cys9/Cys21, and Cys15/Cys28. Phe34 carries the phenylalanine amide modification.

This sequence belongs to the neurotoxin 10 (Hwtx-1) family. 62 (Vatx) subfamily. As to expression, expressed by the venom gland.

It is found in the secreted. Its function is as follows. Selectively activates mammalian TRPV1, or capsaicin receptor, a non-selective cation channel expressed by sensory neurons of the pain pathway. Is more potent than VaTx1 and VaTx2. Interacts with distinct regions of the channel than capsaicin, since it only acts on the extracellular face of the channel, and capsaicin binds to the cytosolic side. Also activates avian TRPV1, which is insensitive to capsaicin. In mice, elicits pain-related behaviors, such as licking and flinching of the affected limb. The paw of toxin-injected mice shows substantial edema. In Psalmopoeus cambridgei (Trinidad chevron tarantula), this protein is Tau-theraphotoxin-Pc1c.